A 238-amino-acid polypeptide reads, in one-letter code: uncharacterized protein (238 aa).

This is an uncharacterized protein from Haemophilus influenzae (strain ATCC 51907 / DSM 11121 / KW20 / Rd).